The primary structure comprises 201 residues: Glutathione peroxidase 1 (201 aa).

Residue Ser32 is modified to Phosphoserine. Sec47 is a catalytic residue. Sec47 is a non-standard amino acid (selenocysteine). Lys86, Lys112, and Lys146 each carry N6-acetyllysine; alternate. Residues Lys86, Lys112, and Lys146 each carry the N6-succinyllysine; alternate modification. Phosphoserine occurs at positions 195 and 199.

Belongs to the glutathione peroxidase family. As to quaternary structure, homotetramer. Interacts with MIEN1. Post-translationally, during periods of oxidative stress, Sec-47 may react with a superoxide radical, irreversibly lose hydroselenide and be converted to dehydroalanine.

The protein resides in the cytoplasm. It localises to the mitochondrion. The enzyme catalyses 2 glutathione + H2O2 = glutathione disulfide + 2 H2O. It catalyses the reaction a hydroperoxy polyunsaturated fatty acid + 2 glutathione = a hydroxy polyunsaturated fatty acid + glutathione disulfide + H2O. It carries out the reaction tert-butyl hydroperoxide + 2 glutathione = tert-butanol + glutathione disulfide + H2O. The catalysed reaction is cumene hydroperoxide + 2 glutathione = 2-phenylpropan-2-ol + glutathione disulfide + H2O. The enzyme catalyses (13S)-hydroperoxy-(9Z,11E)-octadecadienoate + 2 glutathione = (13S)-hydroxy-(9Z,11E)-octadecadienoate + glutathione disulfide + H2O. It catalyses the reaction (9S)-hydroperoxy-(10E,12Z)-octadecadienoate + 2 glutathione = (9S)-hydroxy-(10E,12Z)-octadecadienoate + glutathione disulfide + H2O. It carries out the reaction (5S)-hydroperoxy-(6E,8Z,11Z,14Z)-eicosatetraenoate + 2 glutathione = (5S)-hydroxy-(6E,8Z,11Z,14Z)-eicosatetraenoate + glutathione disulfide + H2O. The catalysed reaction is (12S)-hydroperoxy-(5Z,8Z,10E,14Z)-eicosatetraenoate + 2 glutathione = (12S)-hydroxy-(5Z,8Z,10E,14Z)-eicosatetraenoate + glutathione disulfide + H2O. The enzyme catalyses (12R)-hydroperoxy-(5Z,8Z,10E,14Z)-eicosatetraenoate + 2 glutathione = (12R)-hydroxy-(5Z,8Z,10E,14Z)-eicosatetraenoate + glutathione disulfide + H2O. It catalyses the reaction (15S)-hydroperoxy-(5Z,8Z,11Z,13E)-eicosatetraenoate + 2 glutathione = (15S)-hydroxy-(5Z,8Z,11Z,13E)-eicosatetraenoate + glutathione disulfide + H2O. It carries out the reaction (5S)-hydroperoxy-(6E,8Z,11Z,14Z,17Z)-eicosapentaenoate + 2 glutathione = (5S)-hydroxy-(6E,8Z,11Z,14Z,17Z)-eicosapentaenoate + glutathione disulfide + H2O. The catalysed reaction is (12S)-hydroperoxy-(5Z,8Z,10E,14Z,17Z)-eicosapentaenoate + 2 glutathione = (12S)-hydroxy-(5Z,8Z,10E,14Z,17Z)-eicosapentaenoate + glutathione disulfide + H2O. The enzyme catalyses (15S)-hydroperoxy-(5Z,8Z,11Z,13E,17Z)-eicosapentaenoate + 2 glutathione = (15S)-hydroxy-(5Z,8Z,11Z,13E,17Z)-eicosapentaenoate + glutathione disulfide + H2O. It catalyses the reaction (15S)-hydroperoxy-(11Z,13E)-eicosadienoate + 2 glutathione = (15S)-hydroxy-(11Z,13E)-eicosadienoate + glutathione disulfide + H2O. It carries out the reaction (17S)-hydroperoxy-(4Z,7Z,10Z,13Z,15E,19Z)-docosahexaenoate + 2 glutathione = (17S)-hydroxy-(4Z,7Z,10Z,13Z,15E,19Z)-docosahexaenoate + glutathione disulfide + H2O. Functionally, catalyzes the reduction of hydroperoxides in a glutathione-dependent manner thus regulating cellular redox homeostasis. Can reduce small soluble hydroperoxides such as H2O2, cumene hydroperoxide and tert-butyl hydroperoxide, as well as several fatty acid-derived hydroperoxides. In platelets catalyzes the reduction of 12-hydroperoxyeicosatetraenoic acid, the primary product of the arachidonate 12-lipoxygenase pathway. This Macaca fuscata fuscata (Japanese macaque) protein is Glutathione peroxidase 1 (GPX1).